Consider the following 437-residue polypeptide: Serine hydroxymethyltransferase 2 (437 aa).

Residues Leu-125 and 129–131 (GHL) each bind (6S)-5,6,7,8-tetrahydrofolate. The residue at position 234 (Lys-234) is an N6-(pyridoxal phosphate)lysine.

Belongs to the SHMT family. In terms of assembly, homodimer. It depends on pyridoxal 5'-phosphate as a cofactor.

The protein localises to the cytoplasm. It carries out the reaction (6R)-5,10-methylene-5,6,7,8-tetrahydrofolate + glycine + H2O = (6S)-5,6,7,8-tetrahydrofolate + L-serine. Its pathway is one-carbon metabolism; tetrahydrofolate interconversion. The protein operates within amino-acid biosynthesis; glycine biosynthesis; glycine from L-serine: step 1/1. Functionally, catalyzes the reversible interconversion of serine and glycine with tetrahydrofolate (THF) serving as the one-carbon carrier. This reaction serves as the major source of one-carbon groups required for the biosynthesis of purines, thymidylate, methionine, and other important biomolecules. Also exhibits THF-independent aldolase activity toward beta-hydroxyamino acids, producing glycine and aldehydes, via a retro-aldol mechanism. The protein is Serine hydroxymethyltransferase 2 of Mesorhizobium japonicum (strain LMG 29417 / CECT 9101 / MAFF 303099) (Mesorhizobium loti (strain MAFF 303099)).